We begin with the raw amino-acid sequence, 346 residues long: NADH-ubiquinone oxidoreductase chain 2 (346 aa).

A run of 11 helical transmembrane segments spans residues 1-21, 26-46, 60-80, 96-116, 122-142, 151-171, 178-198, 199-219, 242-262, 274-294, and 320-340; these read MSPY…MLIS, WVFM…ILVW, FIVQ…SLSG, MMIM…YWVV, LNYI…LAVL, SSML…GGLG, LLAF…VAGS, LLGL…FSIL, VLLG…GFFG, LLLG…FYYL, and LSGL…LVGG.

It belongs to the complex I subunit 2 family.

The protein resides in the mitochondrion inner membrane. The enzyme catalyses a ubiquinone + NADH + 5 H(+)(in) = a ubiquinol + NAD(+) + 4 H(+)(out). In terms of biological role, core subunit of the mitochondrial membrane respiratory chain NADH dehydrogenase (Complex I) that is believed to belong to the minimal assembly required for catalysis. Complex I functions in the transfer of electrons from NADH to the respiratory chain. The immediate electron acceptor for the enzyme is believed to be ubiquinone. In Branchiostoma floridae (Florida lancelet), this protein is NADH-ubiquinone oxidoreductase chain 2 (ND2).